A 101-amino-acid chain; its full sequence is Small ribosomal subunit protein uS14 (101 aa).

It belongs to the universal ribosomal protein uS14 family. As to quaternary structure, part of the 30S ribosomal subunit. Contacts proteins S3 and S10.

Functionally, binds 16S rRNA, required for the assembly of 30S particles and may also be responsible for determining the conformation of the 16S rRNA at the A site. The chain is Small ribosomal subunit protein uS14 from Acinetobacter baylyi (strain ATCC 33305 / BD413 / ADP1).